A 165-amino-acid polypeptide reads, in one-letter code: uncharacterized protein (165 aa).

Positions 1 to 38 (MFTVKEKNRQELEEELNDLEFQIYRMQENMKDLSKDAK) form a coiled coil.

This is an uncharacterized protein from Bacillus subtilis (strain 168).